Consider the following 278-residue polypeptide: Ribosomal RNA small subunit methyltransferase A (278 aa).

The S-adenosyl-L-methionine site is built by Asn27, Leu29, Gly54, Glu75, Asp101, and Asn120.

The protein belongs to the class I-like SAM-binding methyltransferase superfamily. rRNA adenine N(6)-methyltransferase family. RsmA subfamily.

The protein localises to the cytoplasm. It catalyses the reaction adenosine(1518)/adenosine(1519) in 16S rRNA + 4 S-adenosyl-L-methionine = N(6)-dimethyladenosine(1518)/N(6)-dimethyladenosine(1519) in 16S rRNA + 4 S-adenosyl-L-homocysteine + 4 H(+). In terms of biological role, specifically dimethylates two adjacent adenosines (A1518 and A1519) in the loop of a conserved hairpin near the 3'-end of 16S rRNA in the 30S particle. May play a critical role in biogenesis of 30S subunits. The polypeptide is Ribosomal RNA small subunit methyltransferase A (Zymomonas mobilis subsp. mobilis (strain ATCC 31821 / ZM4 / CP4)).